The sequence spans 261 residues: Oxidoreductase ptaF (261 aa).

It belongs to the avfA family.

Its pathway is secondary metabolite biosynthesis. Oxidoreductase; part of the gene cluster that mediates the biosynthesis of pestheic acid, a diphenyl ether which is a biosynthetic precursor of the unique chloropupukeananes. The biosynthesis initiates from condensation of acetate and malonate units catalyzed by the non-reducing PKS ptaA. As the ptaA protein is TE/CLC domain-deficient, hydrolysis and Claisen cyclization of the polyketide could be catalyzed by ptaB containing a beta-lactamase domain. The ptaB protein might hydrolyze the thioester bond between the ACP of ptaA and the intermediate to release atrochrysone carboxylic acid, which is spontaneously dehydrated to form endocrocin anthrone. Endocrocin anthrone is then converted to endocrocin, catalyzed by the anthrone oxygenase ptaC. Spontaneous decarboxylation of endocrocin occurs to generate emodin. An O-methyltransferase (ptaH or ptaI) could methylate emodin to form physcion. PtaJ could then catalyze the oxidative cleavage of physcion, and rotation of the intermediate could then afford desmethylisosulochrin. PtaF, a putative NADH-dependent oxidoreductase, might also participate in the oxidative cleavage step. Desmethylisosulochrin is then transformed by another O-methyltransferase (ptaH or ptaI) to form isosulochrin. Chlorination of isosulochrin by ptaM in the cyclohexadienone B ring then produces chloroisosulochrin. PtaE is responsible for the oxidative coupling reactions of both benzophenones isosulouchrin and chloroisosulochrin to RES-1214-1 and pestheic acid respectively, regardless of chlorination. The sequence is that of Oxidoreductase ptaF from Pestalotiopsis fici (strain W106-1 / CGMCC3.15140).